A 339-amino-acid polypeptide reads, in one-letter code: Quinolinate synthase (339 aa).

2 residues coordinate iminosuccinate: His63 and Ser81. Cys126 contacts [4Fe-4S] cluster. Residues 152 to 154 (YVN) and Ser169 contribute to the iminosuccinate site. Cys211 provides a ligand contact to [4Fe-4S] cluster. Iminosuccinate contacts are provided by residues 237 to 239 (HPE) and Thr254. Cys297 contributes to the [4Fe-4S] cluster binding site.

The protein belongs to the quinolinate synthase family. Type 2 subfamily. [4Fe-4S] cluster is required as a cofactor.

It localises to the cytoplasm. It carries out the reaction iminosuccinate + dihydroxyacetone phosphate = quinolinate + phosphate + 2 H2O + H(+). Its pathway is cofactor biosynthesis; NAD(+) biosynthesis; quinolinate from iminoaspartate: step 1/1. Functionally, catalyzes the condensation of iminoaspartate with dihydroxyacetone phosphate to form quinolinate. In Xylella fastidiosa (strain Temecula1 / ATCC 700964), this protein is Quinolinate synthase.